The following is a 457-amino-acid chain: Elongation factor 1-alpha (457 aa).

Position 2 is a n,N,N-trimethylglycine (glycine 2). Lysine 3 carries the post-translational modification N6,N6-dimethyllysine; alternate. Residue lysine 3 is modified to N6-methyllysine; alternate. In terms of domain architecture, tr-type G spans 5 to 240 (KTHVNVVVIG…DAIEPPVRPS (236 aa)). The G1 stretch occupies residues 14–21 (GHVDSGKS). 14–21 (GHVDSGKS) provides a ligand contact to GTP. Lysine 30 carries the post-translational modification N6-methyllysine. Residues 70-74 (GITID) form a G2 region. Position 79 is an N6,N6,N6-trimethyllysine (lysine 79). The G3 stretch occupies residues 91–94 (DAPG). GTP-binding positions include 91–95 (DAPGH) and 153–156 (NKMD). The segment at 153 to 156 (NKMD) is G4. Residues 192–194 (SGW) form a G5 region. Position 316 is an N6,N6-dimethyllysine; alternate (lysine 316). N6-methyllysine; alternate is present on lysine 316. Lysine 389 carries the post-translational modification N6-methyllysine.

This sequence belongs to the TRAFAC class translation factor GTPase superfamily. Classic translation factor GTPase family. EF-Tu/EF-1A subfamily.

The protein localises to the cytoplasm. This protein promotes the GTP-dependent binding of aminoacyl-tRNA to the A-site of ribosomes during protein biosynthesis. The sequence is that of Elongation factor 1-alpha (TEF-3) from Mucor circinelloides f. lusitanicus (Mucor racemosus var. lusitanicus).